Reading from the N-terminus, the 190-residue chain is MKKVSPSYLKHQFLIAMPHMHDENFAQTLTYVVEHNANGAMGLVINRPQSLTLADVLEQLRPELPAPKRCQEIAIHAGGPVQTDRGFVLHPSGQTFQATVDLPGGISLSTSQDVLFSIADGYGPDQNVITLGYAGWDAGQLDAEMADNAWLTCSFDPAILFDVDSDQRLDAAARRLGINLALISTQAGHA.

This sequence belongs to the UPF0301 (AlgH) family.

In Pseudomonas syringae pv. tomato (strain ATCC BAA-871 / DC3000), this protein is UPF0301 protein PSPTO_5037.